Consider the following 84-residue polypeptide: MANIKANEKSYRQNQKANLLTKGFKTSLKNQLKKTKASKDKKDVEQVYSLADKLAKNNRISKNKARRLKSRAARWSNSATAASR.

Basic residues predominate over residues 62-72; the sequence is KNKARRLKSRA. The disordered stretch occupies residues 62–84; it reads KNKARRLKSRAARWSNSATAASR. Residues 75-84 are compositionally biased toward polar residues; it reads WSNSATAASR.

This sequence belongs to the bacterial ribosomal protein bS20 family.

Functionally, binds directly to 16S ribosomal RNA. This Mycoplasmoides gallisepticum (strain R(low / passage 15 / clone 2)) (Mycoplasma gallisepticum) protein is Small ribosomal subunit protein bS20.